Consider the following 194-residue polypeptide: Outer membrane protein A (194 aa).

The N-terminal stretch at 1-24 is a signal peptide; that stretch reads MNKPSKFALALAFAAVTASGVASA. A beta stranded transmembrane segment spans residues 30–38; the sequence is WRNPYGNVW. The OmpA-like domain maps to 77–193; it reads MAAKVVFNAD…RVEIEIVGSR (117 aa).

The protein belongs to the outer membrane OOP (TC 1.B.6) superfamily.

It is found in the cell outer membrane. In terms of biological role, structural protein that may protect the integrity of the bacterium. This is Outer membrane protein A from Bordetella avium.